Consider the following 990-residue polypeptide: Pro-apoptotic serine protease NMA111 (990 aa).

Residues 1–32 (MSVTNSNRKRSLSEVSEGSDPEAPAKTRNSYT) are disordered. The segment at 73-263 (VVSIHFSQVA…LPLDRILRAL (191 aa)) is serine protease. Residues His-111, Asp-142, and Ser-225 each act as charge relay system in the active site. PDZ domains are found at residues 290 to 368 (RRLG…QRGG) and 758 to 843 (SILT…VREG).

This sequence belongs to the peptidase S1C family.

It is found in the nucleus. In terms of biological role, nuclear serine protease which mediates apoptosis. The chain is Pro-apoptotic serine protease NMA111 (NMA111) from Vanderwaltozyma polyspora (strain ATCC 22028 / DSM 70294 / BCRC 21397 / CBS 2163 / NBRC 10782 / NRRL Y-8283 / UCD 57-17) (Kluyveromyces polysporus).